We begin with the raw amino-acid sequence, 382 residues long: Succinate--CoA ligase [ADP-forming] subunit beta (382 aa).

Residues Lys-46, Gly-53–Gly-55, Val-95, and Glu-100 contribute to the ATP site. Positions 192 and 206 each coordinate Mg(2+). Substrate is bound by residues Asn-257 and Gly-314 to Thr-316.

It belongs to the succinate/malate CoA ligase beta subunit family. Heterotetramer of two alpha and two beta subunits. Mg(2+) serves as cofactor.

The catalysed reaction is succinate + ATP + CoA = succinyl-CoA + ADP + phosphate. It catalyses the reaction GTP + succinate + CoA = succinyl-CoA + GDP + phosphate. The protein operates within carbohydrate metabolism; tricarboxylic acid cycle; succinate from succinyl-CoA (ligase route): step 1/1. Its function is as follows. Succinyl-CoA synthetase functions in the citric acid cycle (TCA), coupling the hydrolysis of succinyl-CoA to the synthesis of either ATP or GTP and thus represents the only step of substrate-level phosphorylation in the TCA. The beta subunit provides nucleotide specificity of the enzyme and binds the substrate succinate, while the binding sites for coenzyme A and phosphate are found in the alpha subunit. The polypeptide is Succinate--CoA ligase [ADP-forming] subunit beta (Bacteroides fragilis (strain ATCC 25285 / DSM 2151 / CCUG 4856 / JCM 11019 / LMG 10263 / NCTC 9343 / Onslow / VPI 2553 / EN-2)).